A 79-amino-acid polypeptide reads, in one-letter code: Calcium/calmodulin-dependent protein kinase II inhibitor 2 (79 aa).

Positions 43 to 69 (KRPPKLGQIGRAKRVVIEDDRIDEVLK) are inhibitory domain.

This sequence belongs to the CAMK2N family.

It is found in the nucleus. It localises to the cytoplasm. The protein localises to the cytosol. Functionally, potent and specific cellular inhibitor of CaM-kinase II (CAMK2). Traps Ca(2+)/calmodulin on CAMK2. The sequence is that of Calcium/calmodulin-dependent protein kinase II inhibitor 2 (camk2n2) from Xenopus laevis (African clawed frog).